The sequence spans 172 residues: Adenine phosphoribosyltransferase (172 aa).

Belongs to the purine/pyrimidine phosphoribosyltransferase family. As to quaternary structure, homodimer.

The protein resides in the cytoplasm. The catalysed reaction is AMP + diphosphate = 5-phospho-alpha-D-ribose 1-diphosphate + adenine. It functions in the pathway purine metabolism; AMP biosynthesis via salvage pathway; AMP from adenine: step 1/1. Functionally, catalyzes a salvage reaction resulting in the formation of AMP, that is energically less costly than de novo synthesis. This Anaeromyxobacter dehalogenans (strain 2CP-C) protein is Adenine phosphoribosyltransferase.